A 426-amino-acid polypeptide reads, in one-letter code: MIDPKLLRNDLPMVVAALARRGFDFPEAEYQKLEDLRKASQVKSETLQAERNKLSQQIGKAKSKGEDCADLMAQAAQLESEQAAVEASFNETQKQLDTLLSSVPNLPDDSVPTGKDENDNPEIRRWGTPRTFDFTPKEHADLMQIGLDFTNGVKLAGARFTVLRGALSRLHRAIAQFMLDTHTEEHGYQEMSVPYLVNPQTIYGTGQLPKFEQDLFKTRLSDRDFYLIPTAEVSLTNLVAQEILEESVLPLQFVAHTPCFRSEAGSAGRDVRGMIRQHQFDKVELVHITTPEDSHAALERLTAHAERILQKLELPYRVILLCTGDMGFAARKTYDLEVWLPGQGKYREISSCSNCWDFQARRMQARFRAEGEKRPQLVHTLNGSGLAVGRTLVAILENYQQADGNILIPKALQPYMNGLDRITPSA.

Residues 103-129 form a disordered region; that stretch reads VPNLPDDSVPTGKDENDNPEIRRWGTP. Over residues 114-125 the composition is skewed to basic and acidic residues; the sequence is GKDENDNPEIRR. 230–232 contributes to the L-serine binding site; that stretch reads TAE. Position 261-263 (261-263) interacts with ATP; sequence RSE. Glu284 contributes to the L-serine binding site. 348 to 351 is a binding site for ATP; it reads EISS. Residue Ser384 coordinates L-serine.

Belongs to the class-II aminoacyl-tRNA synthetase family. Type-1 seryl-tRNA synthetase subfamily. Homodimer. The tRNA molecule binds across the dimer.

Its subcellular location is the cytoplasm. It catalyses the reaction tRNA(Ser) + L-serine + ATP = L-seryl-tRNA(Ser) + AMP + diphosphate + H(+). The catalysed reaction is tRNA(Sec) + L-serine + ATP = L-seryl-tRNA(Sec) + AMP + diphosphate + H(+). It functions in the pathway aminoacyl-tRNA biosynthesis; selenocysteinyl-tRNA(Sec) biosynthesis; L-seryl-tRNA(Sec) from L-serine and tRNA(Sec): step 1/1. Catalyzes the attachment of serine to tRNA(Ser). Is also able to aminoacylate tRNA(Sec) with serine, to form the misacylated tRNA L-seryl-tRNA(Sec), which will be further converted into selenocysteinyl-tRNA(Sec). The protein is Serine--tRNA ligase of Dichelobacter nodosus (strain VCS1703A).